The sequence spans 239 residues: tRNA (guanine-N(1)-)-methyltransferase (239 aa).

S-adenosyl-L-methionine contacts are provided by residues glycine 115 and 134 to 139 (MGDFVL). Residues 210–239 (QQQREQRTQERRPDLWNRWQQIQNPTPPAP) are disordered. The span at 211–224 (QQREQRTQERRPDL) shows a compositional bias: basic and acidic residues.

It belongs to the RNA methyltransferase TrmD family. As to quaternary structure, homodimer.

The protein localises to the cytoplasm. It catalyses the reaction guanosine(37) in tRNA + S-adenosyl-L-methionine = N(1)-methylguanosine(37) in tRNA + S-adenosyl-L-homocysteine + H(+). Specifically methylates guanosine-37 in various tRNAs. The chain is tRNA (guanine-N(1)-)-methyltransferase from Synechococcus sp. (strain CC9311).